The chain runs to 85 residues: Putative membrane protein insertion efficiency factor (85 aa).

This sequence belongs to the UPF0161 family.

It is found in the cell membrane. Functionally, could be involved in insertion of integral membrane proteins into the membrane. This chain is Putative membrane protein insertion efficiency factor, found in Baumannia cicadellinicola subsp. Homalodisca coagulata.